A 411-amino-acid chain; its full sequence is L-cysteine:1D-myo-inositol 2-amino-2-deoxy-alpha-D-glucopyranoside ligase (411 aa).

Cys43 is a Zn(2+) binding site. Residues 43–46 (CGIT), Thr58, and 81–83 (NVT) each bind L-cysteinyl-5'-AMP. A 'HIGH' region motif is present at residues 45–55 (ITPYDATHLGH). Residues 186–191 (QRGGDP) carry the 'ERGGDP' region motif. Trp226 provides a ligand contact to L-cysteinyl-5'-AMP. Cys230 contacts Zn(2+). L-cysteinyl-5'-AMP is bound at residue 248-250 (GSD). Residue His255 participates in Zn(2+) binding. An L-cysteinyl-5'-AMP-binding site is contributed by Ile282. Residues 288–292 (KMSKS) carry the 'KMSKS' region motif.

This sequence belongs to the class-I aminoacyl-tRNA synthetase family. MshC subfamily. As to quaternary structure, monomer. It depends on Zn(2+) as a cofactor.

It carries out the reaction 1D-myo-inositol 2-amino-2-deoxy-alpha-D-glucopyranoside + L-cysteine + ATP = 1D-myo-inositol 2-(L-cysteinylamino)-2-deoxy-alpha-D-glucopyranoside + AMP + diphosphate + H(+). Functionally, catalyzes the ATP-dependent condensation of GlcN-Ins and L-cysteine to form L-Cys-GlcN-Ins. This is L-cysteine:1D-myo-inositol 2-amino-2-deoxy-alpha-D-glucopyranoside ligase from Mycobacterium ulcerans (strain Agy99).